Consider the following 391-residue polypeptide: Protein-glutamate methylesterase/protein-glutamine glutaminase of group 2 operon (391 aa).

The 119-residue stretch at 20 to 138 (RVMIVDDSVV…EPQAADIFKH (119 aa)) folds into the Response regulatory domain. A 4-aspartylphosphate modification is found at Asp71. The CheB-type methylesterase domain maps to 196-383 (PTAPRVLLIG…PLNQIGPKVV (188 aa)). Catalysis depends on residues Ser207, His235, and Asp331.

Belongs to the CheB family. Phosphorylated by CheA. Phosphorylation of the N-terminal regulatory domain activates the methylesterase activity.

Its subcellular location is the cytoplasm. It catalyses the reaction [protein]-L-glutamate 5-O-methyl ester + H2O = L-glutamyl-[protein] + methanol + H(+). The catalysed reaction is L-glutaminyl-[protein] + H2O = L-glutamyl-[protein] + NH4(+). Its function is as follows. Involved in chemotaxis. Part of a chemotaxis signal transduction system that modulates chemotaxis in response to various stimuli. Catalyzes the demethylation of specific methylglutamate residues introduced into the chemoreceptors (methyl-accepting chemotaxis proteins or MCP) by CheR. Also mediates the irreversible deamidation of specific glutamine residues to glutamic acid. This is Protein-glutamate methylesterase/protein-glutamine glutaminase of group 2 operon from Rhodopseudomonas palustris (strain ATCC BAA-98 / CGA009).